We begin with the raw amino-acid sequence, 400 residues long: CinA-like protein (400 aa).

It belongs to the CinA family.

The chain is CinA-like protein from Escherichia coli (strain K12 / MC4100 / BW2952).